The following is a 271-amino-acid chain: Aspartate/glutamate leucyltransferase (271 aa).

This sequence belongs to the R-transferase family. Bpt subfamily.

It is found in the cytoplasm. The enzyme catalyses N-terminal L-glutamyl-[protein] + L-leucyl-tRNA(Leu) = N-terminal L-leucyl-L-glutamyl-[protein] + tRNA(Leu) + H(+). It carries out the reaction N-terminal L-aspartyl-[protein] + L-leucyl-tRNA(Leu) = N-terminal L-leucyl-L-aspartyl-[protein] + tRNA(Leu) + H(+). In terms of biological role, functions in the N-end rule pathway of protein degradation where it conjugates Leu from its aminoacyl-tRNA to the N-termini of proteins containing an N-terminal aspartate or glutamate. In Acinetobacter baumannii (strain SDF), this protein is Aspartate/glutamate leucyltransferase.